Consider the following 224-residue polypeptide: Small ribosomal subunit protein uS7 (224 aa).

Belongs to the universal ribosomal protein uS7 family. As to quaternary structure, part of the 30S ribosomal subunit.

Its function is as follows. One of the primary rRNA binding proteins, it binds directly to 16S rRNA where it nucleates assembly of the head domain of the 30S subunit. Is located at the subunit interface close to the decoding center. This is Small ribosomal subunit protein uS7 from Caldivirga maquilingensis (strain ATCC 700844 / DSM 13496 / JCM 10307 / IC-167).